The primary structure comprises 394 residues: NAD(P)H-quinone oxidoreductase subunit H (394 aa).

The protein belongs to the complex I 49 kDa subunit family. In terms of assembly, NDH-1 can be composed of about 15 different subunits; different subcomplexes with different compositions have been identified which probably have different functions.

The protein localises to the cellular thylakoid membrane. It catalyses the reaction a plastoquinone + NADH + (n+1) H(+)(in) = a plastoquinol + NAD(+) + n H(+)(out). The catalysed reaction is a plastoquinone + NADPH + (n+1) H(+)(in) = a plastoquinol + NADP(+) + n H(+)(out). NDH-1 shuttles electrons from an unknown electron donor, via FMN and iron-sulfur (Fe-S) centers, to quinones in the respiratory and/or the photosynthetic chain. The immediate electron acceptor for the enzyme in this species is believed to be plastoquinone. Couples the redox reaction to proton translocation, and thus conserves the redox energy in a proton gradient. Cyanobacterial NDH-1 also plays a role in inorganic carbon-concentration. In Prochlorococcus marinus (strain MIT 9313), this protein is NAD(P)H-quinone oxidoreductase subunit H.